The chain runs to 430 residues: MTSRNCPALLIAAPASGQGKTTVTAALARLHARQGKRVRVFKCGPDFLDPMILARASGKPVYQLDLWMVGEEESRRLLWEAAGEADLILIEGVMGLFDGAPSAADLARRFGVPVLAVIDGSAMAQTFGALAHGLKSFQPELPFAGVLANRVGSTRHGEILRDSLPESIRWYGALPRSVDMELPSRHLGLVQAEELADLDARLDAAADALAQSAETELPPAVSFAAPTRVSLAPLLAGVRIGVARDAAFAFLYQANLDLLQALGAELLFFSPLRFARLPAVDSLYLPGGYPELHLRALSRNGPMAEAIRAHHAAGKPILAECGGMLYLLDGLTDRGDERAEMLGLLPGEARMQQRLSALALQEVELPEGRLRGHTFHHSMLESPLQPLARGECPNYKRTAEAVYRSGRLTASYIHFYLPSDPLAAAALLRP.

A GATase cobBQ-type domain is found at 239 to 422; it reads RIGVARDAAF…IHFYLPSDPL (184 aa). Cys-321 (nucleophile) is an active-site residue.

This sequence belongs to the CobB/CbiA family. It depends on Mg(2+) as a cofactor.

It carries out the reaction hydrogenobyrinate + 2 L-glutamine + 2 ATP + 2 H2O = hydrogenobyrinate a,c-diamide + 2 L-glutamate + 2 ADP + 2 phosphate + 2 H(+). The protein operates within cofactor biosynthesis; adenosylcobalamin biosynthesis; cob(II)yrinate a,c-diamide from precorrin-2 (aerobic route): step 9/10. Its function is as follows. Catalyzes the ATP-dependent amidation of the two carboxylate groups at positions a and c of hydrogenobyrinate, using either L-glutamine or ammonia as the nitrogen source. This is Hydrogenobyrinate a,c-diamide synthase from Stutzerimonas stutzeri (strain A1501) (Pseudomonas stutzeri).